Consider the following 233-residue polypeptide: Ribosome maturation factor RimM (233 aa).

Positions 1-51 (MKRKQDSKGAGSRGQGAGEKKQGAGGRGQGEKKQKKSPVPSPQSPVPDPDE) are disordered. Positions 11–28 (GSRGQGAGEKKQGAGGRG) are enriched in gly residues. The PRC barrel domain maps to 145–226 (GEDEYHVVDL…RIEITPPPGL (82 aa)).

This sequence belongs to the RimM family. As to quaternary structure, binds ribosomal protein uS19.

The protein localises to the cytoplasm. Functionally, an accessory protein needed during the final step in the assembly of 30S ribosomal subunit, possibly for assembly of the head region. Essential for efficient processing of 16S rRNA. May be needed both before and after RbfA during the maturation of 16S rRNA. It has affinity for free ribosomal 30S subunits but not for 70S ribosomes. This Trichormus variabilis (strain ATCC 29413 / PCC 7937) (Anabaena variabilis) protein is Ribosome maturation factor RimM.